The chain runs to 110 residues: UPF0060 membrane protein Pmen_1247 (110 aa).

The next 4 membrane-spanning stretches (helical) occupy residues leucine 5–leucine 25, alanine 31–valine 51, alanine 59–glutamate 79, and methionine 84–alanine 104.

Belongs to the UPF0060 family.

The protein resides in the cell inner membrane. This Ectopseudomonas mendocina (strain ymp) (Pseudomonas mendocina) protein is UPF0060 membrane protein Pmen_1247.